The sequence spans 331 residues: DNA-directed RNA polymerase subunit alpha (331 aa).

The tract at residues Met-1 to Leu-242 is alpha N-terminal domain (alpha-NTD). Residues Val-258–Asn-331 form an alpha C-terminal domain (alpha-CTD) region.

The protein belongs to the RNA polymerase alpha chain family. Homodimer. The RNAP catalytic core consists of 2 alpha, 1 beta, 1 beta' and 1 omega subunit. When a sigma factor is associated with the core the holoenzyme is formed, which can initiate transcription.

The catalysed reaction is RNA(n) + a ribonucleoside 5'-triphosphate = RNA(n+1) + diphosphate. In terms of biological role, DNA-dependent RNA polymerase catalyzes the transcription of DNA into RNA using the four ribonucleoside triphosphates as substrates. The sequence is that of DNA-directed RNA polymerase subunit alpha from Malacoplasma penetrans (strain HF-2) (Mycoplasma penetrans).